Here is a 1288-residue protein sequence, read N- to C-terminus: Outer capsid protein lambda-2 (1288 aa).

892–899 (GAAAAGKS) serves as a coordination point for ATP.

This sequence belongs to the orthoreovirus lambda-2 protein family. Interacts with protein mu-NS; in viral inclusions.

The protein resides in the virion. The enzyme catalyses a 5'-end diphospho-ribonucleoside in mRNA + GTP + H(+) = a 5'-end (5'-triphosphoguanosine)-ribonucleoside in mRNA + diphosphate. It catalyses the reaction a 5'-end (5'-triphosphoguanosine)-ribonucleoside in mRNA + S-adenosyl-L-methionine = a 5'-end (N(7)-methyl 5'-triphosphoguanosine)-ribonucleoside in mRNA + S-adenosyl-L-homocysteine. In terms of biological role, outer capsid protein involved in mRNA capping. Catalyzes the last 3 enzymatic activities for formation of the 5' cap structure on the viral plus-strand transcripts, namely the RNA guanylyltransferase, RNA-7N- and RNA-2'O-methyltransferase activities. This chain is Outer capsid protein lambda-2 (L2), found in Reovirus type 2 (strain D5/Jones) (T2J).